Here is a 281-residue protein sequence, read N- to C-terminus: Probable endonuclease 4 (281 aa).

H67, H107, E142, D176, H179, H211, D224, H226, and E256 together coordinate Zn(2+).

Belongs to the AP endonuclease 2 family. The cofactor is Zn(2+).

It catalyses the reaction Endonucleolytic cleavage to 5'-phosphooligonucleotide end-products.. Its function is as follows. Endonuclease IV plays a role in DNA repair. It cleaves phosphodiester bonds at apurinic or apyrimidinic (AP) sites, generating a 3'-hydroxyl group and a 5'-terminal sugar phosphate. In Alkaliphilus oremlandii (strain OhILAs) (Clostridium oremlandii (strain OhILAs)), this protein is Probable endonuclease 4.